The following is a 270-amino-acid chain: Bacterial microcompartment shell protein PduB (270 aa).

The interval Leu-6–Val-18 is probable helix that binds cargo to the BMC shell. BMC circularly permuted domains lie at Glu-47–Phe-152 and Asp-154–Leu-258.

This sequence belongs to the EutL/PduB family. As to quaternary structure, homotrimerizes to form a pseudohexamer with a central pore. The trimers pack into an array. Post-translationally, in purified BMCs seen as a 28.0 kDa and 25.0 kDa form, both of which have been N-terminally sequenced and whose N-fMet is removed; the smaller form is called PduB'.

It localises to the bacterial microcompartment. It functions in the pathway polyol metabolism; 1,2-propanediol degradation. The two proteins produced are among the major shell proteins of the bacterial microcompartment (BMC) dedicated to 1,2-propanediol (1,2-PD) degradation. Required for structural integrity of BMCs and to mitigate propionaldehyde toxicity. The N-terminal 13 residues are important for correct assembly of the BMC shell. The isolated BMC shell component protein ratio for J:A:B':B:K:T:U is approximately 15:10:7:6:1:1:2. The N-terminus of the long form (PduB) is required for correct formation of BMCs, deletions in the first 37 residues have substantially reduced levels of the major lumen enzymes. May play a major role in binding the enzyme contents to the shell. Functionally, the 1,2-PD-specific bacterial microcompartment (BMC) concentrates low levels of 1,2-PD catabolic enzymes, concentrates volatile reaction intermediates thus enhancing pathway flux and keeps the level of toxic, mutagenic propionaldehyde low. The polypeptide is Bacterial microcompartment shell protein PduB (Salmonella typhimurium (strain LT2 / SGSC1412 / ATCC 700720)).